The following is a 413-amino-acid chain: 1-deoxy-D-xylulose 5-phosphate reductoisomerase (413 aa).

NADPH contacts are provided by threonine 13, glycine 14, serine 15, isoleucine 16, arginine 40, asparagine 41, and asparagine 127. Lysine 128 lines the 1-deoxy-D-xylulose 5-phosphate pocket. Glutamate 129 serves as a coordination point for NADPH. Aspartate 153 is a binding site for Mn(2+). Residues serine 154, glutamate 155, serine 184, and histidine 207 each coordinate 1-deoxy-D-xylulose 5-phosphate. Glutamate 155 contacts Mn(2+). NADPH is bound at residue glycine 213. Serine 220, asparagine 225, lysine 226, and glutamate 229 together coordinate 1-deoxy-D-xylulose 5-phosphate. Glutamate 229 is a Mn(2+) binding site.

The protein belongs to the DXR family. Mg(2+) serves as cofactor. The cofactor is Mn(2+).

It catalyses the reaction 2-C-methyl-D-erythritol 4-phosphate + NADP(+) = 1-deoxy-D-xylulose 5-phosphate + NADPH + H(+). The protein operates within isoprenoid biosynthesis; isopentenyl diphosphate biosynthesis via DXP pathway; isopentenyl diphosphate from 1-deoxy-D-xylulose 5-phosphate: step 1/6. In terms of biological role, catalyzes the NADPH-dependent rearrangement and reduction of 1-deoxy-D-xylulose-5-phosphate (DXP) to 2-C-methyl-D-erythritol 4-phosphate (MEP). The protein is 1-deoxy-D-xylulose 5-phosphate reductoisomerase of Nitrosomonas europaea (strain ATCC 19718 / CIP 103999 / KCTC 2705 / NBRC 14298).